The sequence spans 105 residues: Flagellar transcriptional regulator FlhD (105 aa).

Belongs to the FlhD family. In terms of assembly, homodimer; disulfide-linked. Forms a heterohexamer composed of two FlhC and four FlhD subunits. Each FlhC binds a FlhD dimer, forming a heterotrimer, and a hexamer assembles by dimerization of two heterotrimers.

It is found in the cytoplasm. Functions in complex with FlhC as a master transcriptional regulator that regulates transcription of several flagellar and non-flagellar operons by binding to their promoter region. Activates expression of class 2 flagellar genes, including fliA, which is a flagellum-specific sigma factor that turns on the class 3 genes. Also regulates genes whose products function in a variety of physiological pathways. The polypeptide is Flagellar transcriptional regulator FlhD (Ralstonia pickettii (strain 12J)).